We begin with the raw amino-acid sequence, 269 residues long: Tryptophan synthase alpha chain (269 aa).

Catalysis depends on proton acceptor residues glutamate 49 and aspartate 60.

The protein belongs to the TrpA family. As to quaternary structure, tetramer of two alpha and two beta chains.

The enzyme catalyses (1S,2R)-1-C-(indol-3-yl)glycerol 3-phosphate + L-serine = D-glyceraldehyde 3-phosphate + L-tryptophan + H2O. It participates in amino-acid biosynthesis; L-tryptophan biosynthesis; L-tryptophan from chorismate: step 5/5. Functionally, the alpha subunit is responsible for the aldol cleavage of indoleglycerol phosphate to indole and glyceraldehyde 3-phosphate. This chain is Tryptophan synthase alpha chain, found in Photobacterium profundum (strain SS9).